The chain runs to 192 residues: Mediator of RNA polymerase II transcription subunit 29 (192 aa).

Residues 32 to 51 (MQQQSPQQMQPAPVPQQTQQ) form a disordered region.

The protein belongs to the Mediator complex subunit 29 family. In terms of assembly, component of the Mediator complex.

The protein localises to the nucleus. Its function is as follows. Component of the Mediator complex, a coactivator involved in the regulated transcription of nearly all RNA polymerase II-dependent genes. Mediator functions as a bridge to convey information from gene-specific regulatory proteins to the basal RNA polymerase II transcription machinery. Mediator is recruited to promoters by direct interactions with regulatory proteins and serves as a scaffold for the assembly of a functional preinitiation complex with RNA polymerase II and the general transcription factors. The sequence is that of Mediator of RNA polymerase II transcription subunit 29 (ix) from Bombyx mori (Silk moth).